We begin with the raw amino-acid sequence, 380 residues long: L-lactate dehydrogenase (380 aa).

The FMN hydroxy acid dehydrogenase domain occupies 1–380 (MIISASTDYR…SADSLVQGLR (380 aa)). Position 24 (Tyr-24) interacts with substrate. Residues Ser-106 and Gln-127 each coordinate FMN. Tyr-129 is a substrate binding site. Thr-155 serves as a coordination point for FMN. A substrate-binding site is contributed by Arg-164. Lys-251 is a binding site for FMN. His-275 serves as the catalytic Proton acceptor. Arg-278 contributes to the substrate binding site. Residue 306 to 330 (DSGIRSGLDVVRMIALGADGVLLGR) participates in FMN binding.

Belongs to the FMN-dependent alpha-hydroxy acid dehydrogenase family. The cofactor is FMN.

Its subcellular location is the cell inner membrane. The catalysed reaction is (S)-lactate + A = pyruvate + AH2. Its function is as follows. Catalyzes the conversion of L-lactate to pyruvate. Is coupled to the respiratory chain. The protein is L-lactate dehydrogenase of Serratia proteamaculans (strain 568).